Consider the following 190-residue polypeptide: Hypoxanthine/guanine phosphoribosyltransferase (190 aa).

Belongs to the purine/pyrimidine phosphoribosyltransferase family. Archaeal HPRT subfamily. In terms of assembly, homodimer.

Its subcellular location is the cytoplasm. The catalysed reaction is IMP + diphosphate = hypoxanthine + 5-phospho-alpha-D-ribose 1-diphosphate. It catalyses the reaction GMP + diphosphate = guanine + 5-phospho-alpha-D-ribose 1-diphosphate. It functions in the pathway purine metabolism; IMP biosynthesis via salvage pathway; IMP from hypoxanthine: step 1/1. In terms of biological role, catalyzes a salvage reaction resulting in the formation of IMP that is energically less costly than de novo synthesis. The sequence is that of Hypoxanthine/guanine phosphoribosyltransferase from Methanobacterium paludis (strain DSM 25820 / JCM 18151 / SWAN1).